The sequence spans 97 residues: UPF0729 protein AAEL015238 (97 aa).

Residues 69–97 (EVAASGSGSNGTATAVGSEGEAEETKKSQ) form a disordered region. Residues 74–83 (GSGSNGTATA) show a composition bias toward polar residues.

The protein belongs to the UPF0729 family.

In Aedes aegypti (Yellowfever mosquito), this protein is UPF0729 protein AAEL015238.